We begin with the raw amino-acid sequence, 262 residues long: Intron-encoded DNA endonuclease ai2b (262 aa).

Belongs to the LAGLIDADG endonuclease family.

It localises to the mitochondrion. Mitochondrial DNA endonuclease involved in intron homing. The polypeptide is Intron-encoded DNA endonuclease ai2b (ai2b) (Dictyostelium discoideum (Social amoeba)).